Here is a 247-residue protein sequence, read N- to C-terminus: tRNA pseudouridine synthase A (247 aa).

Asp53 serves as the catalytic Nucleophile. Residue Tyr111 participates in substrate binding.

The protein belongs to the tRNA pseudouridine synthase TruA family. Homodimer.

It catalyses the reaction uridine(38/39/40) in tRNA = pseudouridine(38/39/40) in tRNA. Functionally, formation of pseudouridine at positions 38, 39 and 40 in the anticodon stem and loop of transfer RNAs. This Lacticaseibacillus casei (strain BL23) (Lactobacillus casei) protein is tRNA pseudouridine synthase A.